We begin with the raw amino-acid sequence, 120 residues long: Large ribosomal subunit protein uL18 (120 aa).

The protein belongs to the universal ribosomal protein uL18 family. Part of the 50S ribosomal subunit; part of the 5S rRNA/L5/L18/L25 subcomplex. Contacts the 5S and 23S rRNAs.

In terms of biological role, this is one of the proteins that bind and probably mediate the attachment of the 5S RNA into the large ribosomal subunit, where it forms part of the central protuberance. In Brucella suis biovar 1 (strain 1330), this protein is Large ribosomal subunit protein uL18.